We begin with the raw amino-acid sequence, 377 residues long: Putative FBD-associated F-box protein At5g44940 (377 aa).

One can recognise an F-box domain in the interval 4-50 (FDYISEFPDCLLTQILLNLPTKDSVKTSVLSKRWRNLWLNVPGLRLR). Residues 297-346 (IDFHKVPQCLISTLEYVQIEELILKEKSGIKLVDYFLENSAVLKKLTLSF) enclose the FBD domain.

The polypeptide is Putative FBD-associated F-box protein At5g44940 (Arabidopsis thaliana (Mouse-ear cress)).